A 393-amino-acid chain; its full sequence is Formate-dependent phosphoribosylglycinamide formyltransferase (393 aa).

Residues 22–23 (EL) and Glu82 contribute to the N(1)-(5-phospho-beta-D-ribosyl)glycinamide site. ATP is bound by residues Arg114, Lys155, 160-165 (SSGKGQ), 195-198 (EGFI), and Glu203. The ATP-grasp domain occupies 119-308 (RLAAEELDLP…QFALHARAIL (190 aa)). The Mg(2+) site is built by Glu267 and Glu279. Residues Asp286, Lys356, and 363-364 (RR) each bind N(1)-(5-phospho-beta-D-ribosyl)glycinamide.

Belongs to the PurK/PurT family. Homodimer.

It catalyses the reaction N(1)-(5-phospho-beta-D-ribosyl)glycinamide + formate + ATP = N(2)-formyl-N(1)-(5-phospho-beta-D-ribosyl)glycinamide + ADP + phosphate + H(+). Its pathway is purine metabolism; IMP biosynthesis via de novo pathway; N(2)-formyl-N(1)-(5-phospho-D-ribosyl)glycinamide from N(1)-(5-phospho-D-ribosyl)glycinamide (formate route): step 1/1. Its function is as follows. Involved in the de novo purine biosynthesis. Catalyzes the transfer of formate to 5-phospho-ribosyl-glycinamide (GAR), producing 5-phospho-ribosyl-N-formylglycinamide (FGAR). Formate is provided by PurU via hydrolysis of 10-formyl-tetrahydrofolate. The sequence is that of Formate-dependent phosphoribosylglycinamide formyltransferase from Pseudomonas putida (strain GB-1).